We begin with the raw amino-acid sequence, 362 residues long: 3-isopropylmalate dehydrogenase (362 aa).

Position 78–91 (78–91 (GPQWDTLPSDKRPE)) interacts with NAD(+). Substrate-binding residues include Arg-98, Arg-108, Arg-136, and Asp-226. 3 residues coordinate Mg(2+): Asp-226, Asp-250, and Asp-254. Position 284–296 (284–296 (GSAPDIAGQDKAN)) interacts with NAD(+).

It belongs to the isocitrate and isopropylmalate dehydrogenases family. LeuB type 1 subfamily. As to quaternary structure, homodimer. It depends on Mg(2+) as a cofactor. Requires Mn(2+) as cofactor.

The protein resides in the cytoplasm. It catalyses the reaction (2R,3S)-3-isopropylmalate + NAD(+) = 4-methyl-2-oxopentanoate + CO2 + NADH. The protein operates within amino-acid biosynthesis; L-leucine biosynthesis; L-leucine from 3-methyl-2-oxobutanoate: step 3/4. Functionally, catalyzes the oxidation of 3-carboxy-2-hydroxy-4-methylpentanoate (3-isopropylmalate) to 3-carboxy-4-methyl-2-oxopentanoate. The product decarboxylates to 4-methyl-2 oxopentanoate. The polypeptide is 3-isopropylmalate dehydrogenase (Gloeobacter violaceus (strain ATCC 29082 / PCC 7421)).